Consider the following 99-residue polypeptide: NADH-quinone oxidoreductase subunit K (99 aa).

Transmembrane regions (helical) follow at residues 3–23 (PDNY…GVLL), 28–48 (IVVF…FVAF), and 59–79 (VVAF…LAII).

It belongs to the complex I subunit 4L family. In terms of assembly, NDH-1 is composed of 14 different subunits. Subunits NuoA, H, J, K, L, M, N constitute the membrane sector of the complex.

It localises to the cell membrane. The catalysed reaction is a quinone + NADH + 5 H(+)(in) = a quinol + NAD(+) + 4 H(+)(out). Functionally, NDH-1 shuttles electrons from NADH, via FMN and iron-sulfur (Fe-S) centers, to quinones in the respiratory chain. The immediate electron acceptor for the enzyme in this species is believed to be a menaquinone. Couples the redox reaction to proton translocation (for every two electrons transferred, four hydrogen ions are translocated across the cytoplasmic membrane), and thus conserves the redox energy in a proton gradient. This Mycobacterium sp. (strain KMS) protein is NADH-quinone oxidoreductase subunit K.